Consider the following 631-residue polypeptide: 1,4-alpha-glucan branching enzyme GlgB (631 aa).

Aspartate 309 (nucleophile) is an active-site residue. Glutamate 362 acts as the Proton donor in catalysis.

Belongs to the glycosyl hydrolase 13 family. GlgB subfamily. As to quaternary structure, monomer.

It catalyses the reaction Transfers a segment of a (1-&gt;4)-alpha-D-glucan chain to a primary hydroxy group in a similar glucan chain.. The protein operates within glycan biosynthesis; glycogen biosynthesis. Its function is as follows. Catalyzes the formation of the alpha-1,6-glucosidic linkages in glycogen by scission of a 1,4-alpha-linked oligosaccharide from growing alpha-1,4-glucan chains and the subsequent attachment of the oligosaccharide to the alpha-1,6 position. The protein is 1,4-alpha-glucan branching enzyme GlgB of Marinobacter nauticus (strain ATCC 700491 / DSM 11845 / VT8) (Marinobacter aquaeolei).